Reading from the N-terminus, the 227-residue chain is Zeamatin (227 aa).

Residues 1–20 (MAGSVAIVGIFVALLAVAGE) form the signal peptide. Disulfide bonds link cysteine 30-cysteine 226, cysteine 72-cysteine 82, cysteine 87-cysteine 93, cysteine 139-cysteine 215, cysteine 145-cysteine 198, cysteine 153-cysteine 163, cysteine 167-cysteine 176, and cysteine 177-cysteine 185.

This sequence belongs to the thaumatin family.

Has antifungal activity. Inhibits Candida albicans and Trichoderma reesei; marginal inhibition observed against Alternaria solani and Neurospora crassa. This is Zeamatin (Zlp) from Zea mays (Maize).